The chain runs to 301 residues: MDLALLRTFVTVHRAGSFTRAAALLGLSQPAVTSQIRTLERQLGRPLFLRQARGVTPTTIGDELAHRAAPHLDALVEIAESGLDDDSSSRTLYLAGPPEFTTERVLPALTGLTGDDGQGLTLRVSFGTAEETLEGLSCGRHDLAISTTRPRGALLSATPLCDEEHVLVAAPRWAERIGADTVRLKGAPALDDLPVVEVHESLPFVSRYWASVFDCAPAATGTVIVPDLRAVLSCASAGAGLAVLPRYLCARALEQGAVVTLLDPVVPPLRTYFLVVRTGTLALPHVARAHEWLRHAATAWC.

One can recognise an HTH lysR-type domain in the interval 1-58; that stretch reads MDLALLRTFVTVHRAGSFTRAAALLGLSQPAVTSQIRTLERQLGRPLFLRQARGVTPT. The segment at residues 18-37 is a DNA-binding region (H-T-H motif); that stretch reads FTRAAALLGLSQPAVTSQIR.

This sequence belongs to the LysR transcriptional regulatory family.

In terms of biological role, putative regulator that may be involved in stimulating antibiotic production in S.antibioticus. The chain is HTH-type transcriptional regulator AbaB from Streptomyces antibioticus.